We begin with the raw amino-acid sequence, 385 residues long: D-alanyl-D-alanine-carboxypeptidase/endopeptidase AmpH (385 aa).

The N-terminal stretch at 1–21 (MKRSLLFSAVLCAASLTSVHA) is a signal peptide.

It belongs to the beta-lactamase family.

Its subcellular location is the cell inner membrane. With respect to regulation, inhibited by cefmetazole. Hydrolyzes the cross-linked dimers tetrapentapeptide (D45) and tetratetrapeptide (D44). Removes the terminal D-alanine from muropeptides and disaccharide pentapeptide M5 with a C-terminal D-Ala-D-Ala dipeptide. Associated with recycling and remodeling of peptidoglycan (PG). The chain is D-alanyl-D-alanine-carboxypeptidase/endopeptidase AmpH (ampH) from Escherichia coli O157:H7.